Here is a 782-residue protein sequence, read N- to C-terminus: DnaJ homolog subfamily C member 16 (782 aa).

Residues 1 to 25 form the signal peptide; the sequence is MEVRKLSISWQFLIVLVLILQILSA. At 26–535 the chain is on the cytoplasmic side; that stretch reads LDFDPYKVLG…DSIFHNNWRE (510 aa). One can recognise a J domain in the interval 29-93; that stretch reads DPYKVLGVSR…EKRSNYDQYG (65 aa). The 129-residue stretch at 119–247 folds into the Thioredoxin domain; that stretch reads FYFDESFFHF…LRQFVESLLP (129 aa). A helical; Anchor for type IV membrane protein membrane pass occupies residues 536-556; that stretch reads MMPLLSLIFSALFILFGTVIV. The Extracellular portion of the chain corresponds to 557–782; it reads QAFSDSSDER…FYIPSWPELD (226 aa). Residues 562-593 are disordered; the sequence is SSDERESSPPDKEEAQEKTGKTEPSFTKENSS. Positions 563–582 are enriched in basic and acidic residues; that stretch reads SDERESSPPDKEEAQEKTGK. Residues 583-593 show a composition bias toward polar residues; that stretch reads TEPSFTKENSS. Residue N631 is glycosylated (N-linked (GlcNAc...) asparagine).

Its subcellular location is the endoplasmic reticulum membrane. Plays an important role in regulating the size of autophagosomes during the formation process. This Pongo abelii (Sumatran orangutan) protein is DnaJ homolog subfamily C member 16 (DNAJC16).